Reading from the N-terminus, the 356-residue chain is Carminomycin 4-O-methyltransferase DauK (356 aa).

Arg153 is an S-adenosyl-L-methionine binding site. Position 163 (Asp163) interacts with substrate. S-adenosyl-L-methionine-binding positions include Gly187, Glu210, 237–238 (DF), and Ser252. The substrate site is built by Asn257 and Arg303.

The protein belongs to the class I-like SAM-binding methyltransferase superfamily. Cation-independent O-methyltransferase family. Homodimer and homotetramer in equilibrium.

The catalysed reaction is carminomycin + S-adenosyl-L-methionine = daunorubicin + S-adenosyl-L-homocysteine + H(+). The protein operates within antibiotic biosynthesis; daunorubicin biosynthesis. Its pathway is antibiotic biosynthesis; carminomycin biosynthesis. Strongly inhibited by S-adenosyl-L-homocysteine and weakly by adenine and methionine. Functionally, involved in the biosynthesis of the anthracyclines carminomycin and daunorubicin (daunomycin) which are aromatic polyketide antibiotics that exhibit high cytotoxicity and are widely applied in the chemotherapy of a variety of cancers. In vivo, catalyzes the transfer of a methyl group from S-adenosyl-L-methionine to the 4-O-position of carminomycin to form daunorubicin. In vitro, it also methylates the anthracyclines rhodomycin D (10-carbomethoxy-13-deoxycarminomycin), 10-carboxy-13-deoxycarminomycin, 13-deoxy-carminomycin and 13-dihydrocarminomycin at the 4-hydroxyl position. This chain is Carminomycin 4-O-methyltransferase DauK (dauK), found in Streptomyces sp. (strain C5).